The sequence spans 630 residues: tRNA uridine 5-carboxymethylaminomethyl modification enzyme MnmG (630 aa).

14–19 (GGGHAG) is a binding site for FAD. 282–296 (GTRYCPSIEDKVRKF) lines the NAD(+) pocket.

It belongs to the MnmG family. In terms of assembly, homodimer. Heterotetramer of two MnmE and two MnmG subunits. Requires FAD as cofactor.

The protein resides in the cytoplasm. NAD-binding protein involved in the addition of a carboxymethylaminomethyl (cmnm) group at the wobble position (U34) of certain tRNAs, forming tRNA-cmnm(5)s(2)U34. The protein is tRNA uridine 5-carboxymethylaminomethyl modification enzyme MnmG of Treponema pallidum (strain Nichols).